The primary structure comprises 423 residues: Mitogen-activated protein kinase 9 (423 aa).

A Protein kinase domain is found at Tyr26–Ile321. ATP contacts are provided by residues Ile32–Val40 and Lys55. Asp151 serves as the catalytic Proton acceptor. Thr183 carries the phosphothreonine; by MAP2K7 modification. The TXY signature appears at Thr183–Tyr185. Tyr185 is modified (phosphotyrosine; by MAP2K4). Over residues Arg366–Pro375 the composition is skewed to basic and acidic residues. Residues Arg366–Arg423 are disordered. Residues Ser387–Thr416 show a composition bias toward low complexity.

It belongs to the protein kinase superfamily. CMGC Ser/Thr protein kinase family. MAP kinase subfamily. As to quaternary structure, interacts with MECOM. Binds to at least four scaffolding proteins, MAPK8IP1/JIP-1, MAPK8IP2/JIP-2, MAPK8IP3/JIP-3/JSAP1 and SPAG9/MAPK8IP4/JIP-4. These proteins also bind other components of the JNK signaling pathway. Interacts with NFATC4. Interacts with ATF7; the interaction does not phosphorylate ATF7 but acts as a docking site for ATF7-associated partners such as JUN. Interacts with BCL10. Interacts with CTNNB1 and GSK3B. Interacts with DCLK2. Interacts with MAPKBP1. Interacts with POU5F1; phosphorylates POU5F1 at 'Ser-347'. Found in a complex with SH3RF1, RAC2, MAP3K7/TAK1, MAP2K7/MKK7, MAPK8IP1/JIP1 and MAPK8/JNK1. Mg(2+) is required as a cofactor. In terms of processing, dually phosphorylated on Thr-183 and Tyr-185 by MAP2K7 and MAP2K4, which activates the enzyme. Autophosphorylated in vitro.

The protein resides in the cytoplasm. The protein localises to the nucleus. The catalysed reaction is L-seryl-[protein] + ATP = O-phospho-L-seryl-[protein] + ADP + H(+). It carries out the reaction L-threonyl-[protein] + ATP = O-phospho-L-threonyl-[protein] + ADP + H(+). Activated by threonine and tyrosine phosphorylation by either of two dual specificity kinases, MAP2K4 and MAP2K7. MAP2K4 shows a strong preference for Tyr-185 while MAP2K7 phosphorylates Tyr-183 preferentially. Inhibited by dual specificity phosphatases, such as DUSP1. Serine/threonine-protein kinase involved in various processes such as cell proliferation, differentiation, migration, transformation and programmed cell death. Extracellular stimuli such as pro-inflammatory cytokines or physical stress stimulate the stress-activated protein kinase/c-Jun N-terminal kinase (SAP/JNK) signaling pathway. In this cascade, two dual specificity kinases MAP2K4/MKK4 and MAP2K7/MKK7 phosphorylate and activate MAPK9/JNK2. In turn, MAPK9/JNK2 phosphorylates a number of transcription factors, primarily components of AP-1 such as JUN and ATF2 and thus regulates AP-1 transcriptional activity. In response to oxidative or ribotoxic stresses, inhibits rRNA synthesis by phosphorylating and inactivating the RNA polymerase 1-specific transcription initiation factor RRN3. Promotes stressed cell apoptosis by phosphorylating key regulatory factors including TP53 and YAP1. In T-cells, MAPK8 and MAPK9 are required for polarized differentiation of T-helper cells into Th1 cells. Upon T-cell receptor (TCR) stimulation, is activated by CARMA1, BCL10, MAP2K7 and MAP3K7/TAK1 to regulate JUN protein levels. Plays an important role in the osmotic stress-induced epithelial tight-junctions disruption. When activated, promotes beta-catenin/CTNNB1 degradation and inhibits the canonical Wnt signaling pathway. Also participates in neurite growth in spiral ganglion neurons. Phosphorylates the CLOCK-BMAL1 heterodimer and plays a role in the regulation of the circadian clock. Phosphorylates POU5F1, which results in the inhibition of POU5F1's transcriptional activity and enhances its proteasomal degradation. Phosphorylates ALKBH5 in response to reactive oxygen species (ROS), promoting ALKBH5 sumoylation and inactivation. This Rattus norvegicus (Rat) protein is Mitogen-activated protein kinase 9 (Mapk9).